We begin with the raw amino-acid sequence, 202 residues long: Putative 3-methyladenine DNA glycosylase (202 aa).

This sequence belongs to the DNA glycosylase MPG family.

This chain is Putative 3-methyladenine DNA glycosylase, found in Clostridium botulinum (strain Alaska E43 / Type E3).